The sequence spans 166 residues: Cyclic pyranopterin monophosphate synthase (166 aa).

Substrate-binding positions include 83–85 (LCH) and 121–122 (ME). Aspartate 136 is a catalytic residue.

Belongs to the MoaC family. As to quaternary structure, homohexamer; trimer of dimers.

The enzyme catalyses (8S)-3',8-cyclo-7,8-dihydroguanosine 5'-triphosphate = cyclic pyranopterin phosphate + diphosphate. The protein operates within cofactor biosynthesis; molybdopterin biosynthesis. Its function is as follows. Catalyzes the conversion of (8S)-3',8-cyclo-7,8-dihydroguanosine 5'-triphosphate to cyclic pyranopterin monophosphate (cPMP). This chain is Cyclic pyranopterin monophosphate synthase, found in Rhodospirillum rubrum (strain ATCC 11170 / ATH 1.1.1 / DSM 467 / LMG 4362 / NCIMB 8255 / S1).